Here is a 1066-residue protein sequence, read N- to C-terminus: TBC1 domain family member 31 (1066 aa).

7 WD repeats span residues 33–74 (HNTS…LHGN), 75–116 (RFNL…TVTK), 117–157 (ELVS…LDTF), 158–200 (QRKR…CDTL), 201–248 (FCKY…ARQL), 249–296 (FRII…MQTC), and 297–334 (KLLF…NIYS). In terms of domain architecture, Rab-GAP TBC spans 424–599 (EYPTKYRMFI…KLFDNIFSNH (176 aa)). Coiled-coil stretches lie at residues 728 to 861 (QKQE…DLEE) and 914 to 948 (NKCY…KWKE). Residues 989 to 998 (CHKEEPRFQN) show a composition bias toward basic and acidic residues. The interval 989-1020 (CHKEEPRFQNEQDSSCLPRTSQLNDSSEMDPS) is disordered. Residues 999 to 1020 (EQDSSCLPRTSQLNDSSEMDPS) show a composition bias toward polar residues. The mediates direct interaction with PJA2 stretch occupies residues 1053 to 1056 (RARH).

In terms of assembly, interacts with PJA2; the interaction is direct and recruits PJA2 to centrosomes. Interacts with OFD1; regulates its activity in cilium assembly. Interacts with PRKACA.

It localises to the cytoplasm. Its subcellular location is the cytoskeleton. The protein localises to the microtubule organizing center. It is found in the centrosome. The protein resides in the centriolar satellite. It localises to the cilium basal body. In terms of biological role, molecular adapter which is involved in cilium biogenesis. Part of a functional complex including OFD1 a centriolar protein involved in cilium assembly. Could regulate the cAMP-dependent phosphorylation of OFD1, and its subsequent ubiquitination by PJA2 which ultimately leads to its proteasomal degradation. This chain is TBC1 domain family member 31, found in Homo sapiens (Human).